A 291-amino-acid chain; its full sequence is HTH-type transcriptional activator AmpR (291 aa).

The HTH lysR-type domain maps to 6 to 63 (LPLNSLRAFEAAARHLSFTHAAIELNVTHSAISQHVKTLEQHLNCQLFVRVSRGLMLT). The H-T-H motif DNA-binding region spans 23-42 (FTHAAIELNVTHSAISQHVK).

Belongs to the LysR transcriptional regulatory family.

It is found in the cytoplasm. This protein is a positive regulator of gene expression of cephalosporinase (AmpC). The polypeptide is HTH-type transcriptional activator AmpR (ampR) (Enterobacter cloacae).